The following is a 118-amino-acid chain: Hydrogenase maturation factor HypA (118 aa).

A Ni(2+)-binding site is contributed by His-2. Cys-74, Cys-77, Cys-91, and Cys-94 together coordinate Zn(2+).

This sequence belongs to the HypA/HybF family.

Involved in the maturation of [NiFe] hydrogenases. Required for nickel insertion into the metal center of the hydrogenase. This Helicobacter hepaticus (strain ATCC 51449 / 3B1) protein is Hydrogenase maturation factor HypA.